Consider the following 415-residue polypeptide: Imidazolonepropionase (415 aa).

H76 and H78 together coordinate Fe(3+). 2 residues coordinate Zn(2+): H76 and H78. 4-imidazolone-5-propanoate-binding residues include R85, Y148, and H181. Residue Y148 coordinates N-formimidoyl-L-glutamate. H246 lines the Fe(3+) pocket. H246 contributes to the Zn(2+) binding site. E249 contacts 4-imidazolone-5-propanoate. D320 is a Fe(3+) binding site. Zn(2+) is bound at residue D320. Residues N322 and G324 each contribute to the N-formimidoyl-L-glutamate site. T325 provides a ligand contact to 4-imidazolone-5-propanoate.

It belongs to the metallo-dependent hydrolases superfamily. HutI family. Zn(2+) serves as cofactor. Requires Fe(3+) as cofactor.

Its subcellular location is the cytoplasm. It catalyses the reaction 4-imidazolone-5-propanoate + H2O = N-formimidoyl-L-glutamate. The protein operates within amino-acid degradation; L-histidine degradation into L-glutamate; N-formimidoyl-L-glutamate from L-histidine: step 3/3. Catalyzes the hydrolytic cleavage of the carbon-nitrogen bond in imidazolone-5-propanoate to yield N-formimidoyl-L-glutamate. It is the third step in the universal histidine degradation pathway. The protein is Imidazolonepropionase of Thermoanaerobacter pseudethanolicus (strain ATCC 33223 / 39E) (Clostridium thermohydrosulfuricum).